The chain runs to 434 residues: 3-phosphoshikimate 1-carboxyvinyltransferase (434 aa).

3 residues coordinate 3-phosphoshikimate: Lys-22, Ser-23, and Arg-27. Lys-22 serves as a coordination point for phosphoenolpyruvate. Gly-93 and Arg-121 together coordinate phosphoenolpyruvate. 3-phosphoshikimate is bound by residues Ser-168, Ser-169, Gln-170, Ser-199, Asp-320, and Lys-347. Position 170 (Gln-170) interacts with phosphoenolpyruvate. The active-site Proton acceptor is the Asp-320. Phosphoenolpyruvate is bound by residues Arg-351, Arg-394, and Lys-419.

It belongs to the EPSP synthase family. In terms of assembly, monomer.

The protein localises to the cytoplasm. It carries out the reaction 3-phosphoshikimate + phosphoenolpyruvate = 5-O-(1-carboxyvinyl)-3-phosphoshikimate + phosphate. Its pathway is metabolic intermediate biosynthesis; chorismate biosynthesis; chorismate from D-erythrose 4-phosphate and phosphoenolpyruvate: step 6/7. In terms of biological role, catalyzes the transfer of the enolpyruvyl moiety of phosphoenolpyruvate (PEP) to the 5-hydroxyl of shikimate-3-phosphate (S3P) to produce enolpyruvyl shikimate-3-phosphate and inorganic phosphate. This chain is 3-phosphoshikimate 1-carboxyvinyltransferase, found in Burkholderia lata (strain ATCC 17760 / DSM 23089 / LMG 22485 / NCIMB 9086 / R18194 / 383).